A 341-amino-acid chain; its full sequence is MIKLNQIVKRYHTKDKDVLAVDHVDLNIESGSIFGVIGFSGAGKSTLIRMFNNLESPTSGEIIIDGDNISQLSKSQLRKKRQKVSMIFQHFNLLWSRNVLKNVTFPLEIAGVPSGLAKQKALELIELVGLKGRESAYPSELSGGQKQRVGIARALANDPDVLLCDEATSALDPQTTDEILDLLLKVREQQNLTIVLITHEMHVIRRMCDEVAVMENGKVIEQGAVSKVFENPQHEVTKRFVKDDLNDDFEDSLEYLEPLDHDAYIVRLNFTGENTTEPIISYMTKTHNIDVNILEADIKNTKNGSLGFLVIHIPHISEEHFKQFKHNLHEQHVNVEVLKHG.

Residues 2–241 (IKLNQIVKRY…PQHEVTKRFV (240 aa)) form the ABC transporter domain. ATP is bound at residue 38 to 45 (GFSGAGKS).

This sequence belongs to the ABC transporter superfamily. Methionine importer (TC 3.A.1.24) family. The complex is composed of two ATP-binding proteins (MetN), two transmembrane proteins (MetI) and a solute-binding protein (MetQ).

It is found in the cell membrane. It carries out the reaction L-methionine(out) + ATP + H2O = L-methionine(in) + ADP + phosphate + H(+). The enzyme catalyses D-methionine(out) + ATP + H2O = D-methionine(in) + ADP + phosphate + H(+). In terms of biological role, part of the ABC transporter complex MetNIQ involved in methionine import. Responsible for energy coupling to the transport system. This chain is Methionine import ATP-binding protein MetN 1, found in Staphylococcus epidermidis (strain ATCC 12228 / FDA PCI 1200).